Consider the following 344-residue polypeptide: uncharacterized protein (344 aa).

This sequence belongs to the MG414/MG415 family.

This is an uncharacterized protein from Mycoplasma pneumoniae (strain ATCC 29342 / M129 / Subtype 1) (Mycoplasmoides pneumoniae).